The following is a 151-amino-acid chain: Protein Turandot Z (151 aa).

The N-terminal stretch at 1-23 is a signal peptide; it reads MSRLIHLSFVLALLACLTGPISA.

It belongs to the Turandot family.

The protein localises to the secreted. A humoral factor that may play a role in stress tolerance. This chain is Protein Turandot Z, found in Drosophila pseudoobscura pseudoobscura (Fruit fly).